A 231-amino-acid chain; its full sequence is MKLDVVTIFPEYLEPLRTALLGKAIDKGLISVDVHDLRRWTHDVHKSVDDAPYGGGPGMVMKPTVWGDALDAVCPDDALLVVPTPAGVPFTQATAQRWAAERHLVFACGRYEGIDQRVFDDAARRVRVEEVSIGDYVLIGGEAAVLVMVEAVVRLLPGVLGNQQSHEQDSFSDGLLEGPSYTRPVSWRGLEVPPILLSGDHAKVAAWRREQSLARTRERRPDLLPPESSSD.

S-adenosyl-L-methionine contacts are provided by residues Gly-109 and 133 to 138; that span reads IGDYVL.

This sequence belongs to the RNA methyltransferase TrmD family. In terms of assembly, homodimer.

The protein localises to the cytoplasm. The enzyme catalyses guanosine(37) in tRNA + S-adenosyl-L-methionine = N(1)-methylguanosine(37) in tRNA + S-adenosyl-L-homocysteine + H(+). Its function is as follows. Specifically methylates guanosine-37 in various tRNAs. The polypeptide is tRNA (guanine-N(1)-)-methyltransferase (Nocardia farcinica (strain IFM 10152)).